A 723-amino-acid chain; its full sequence is Fatty acid oxidation complex subunit alpha (723 aa).

Residues 1–189 form an enoyl-CoA hydratase/isomerase region; sequence MIYQADTLQV…KIGLLDAVVE (189 aa). A substrate-binding site is contributed by Asp296. The interval 311 to 723 is 3-hydroxyacyl-CoA dehydrogenase; sequence SKDTERAAVL…FYGAQQQGSI (413 aa). NAD(+) contacts are provided by residues Met325, Asp344, 401 to 403, Lys408, and Ser430; that span reads VVE. The active-site For 3-hydroxyacyl-CoA dehydrogenase activity is His451. Position 454 (Asn454) interacts with NAD(+). Residues Asn501 and Tyr661 each contribute to the substrate site.

This sequence in the N-terminal section; belongs to the enoyl-CoA hydratase/isomerase family. The protein in the C-terminal section; belongs to the 3-hydroxyacyl-CoA dehydrogenase family. As to quaternary structure, heterotetramer of two alpha chains (FadB) and two beta chains (FadA).

It carries out the reaction a (3S)-3-hydroxyacyl-CoA + NAD(+) = a 3-oxoacyl-CoA + NADH + H(+). The enzyme catalyses a (3S)-3-hydroxyacyl-CoA = a (2E)-enoyl-CoA + H2O. The catalysed reaction is a 4-saturated-(3S)-3-hydroxyacyl-CoA = a (3E)-enoyl-CoA + H2O. It catalyses the reaction (3S)-3-hydroxybutanoyl-CoA = (3R)-3-hydroxybutanoyl-CoA. It carries out the reaction a (3Z)-enoyl-CoA = a 4-saturated (2E)-enoyl-CoA. The enzyme catalyses a (3E)-enoyl-CoA = a 4-saturated (2E)-enoyl-CoA. It functions in the pathway lipid metabolism; fatty acid beta-oxidation. In terms of biological role, involved in the aerobic and anaerobic degradation of long-chain fatty acids via beta-oxidation cycle. Catalyzes the formation of 3-oxoacyl-CoA from enoyl-CoA via L-3-hydroxyacyl-CoA. It can also use D-3-hydroxyacyl-CoA and cis-3-enoyl-CoA as substrate. The chain is Fatty acid oxidation complex subunit alpha from Vibrio parahaemolyticus serotype O3:K6 (strain RIMD 2210633).